The chain runs to 584 residues: MPVVNHEDSEFHLSHTEEDKLNEFQVITNFPPEDLPDVVRLLRNHGWQLEPALSRYFDGEWKGEPDQMGEPTQTSTPMAETLVPPALGPRPLLFTASLPVVRPLPANFRNDFRTIGLNGRSNTVWSMFESFSYDGNPFLFILLLIPRIINRLSATIFTFFCTLLSLHSISGGGNSGKPKISKVPKAPTRETHIPLAEILGDTKDKDAFCELKSFKPDISFNEALRIAKEEFKFMLLILVGDTYDTDTDTVDVNSKLLLEKILLNKKTLQYLRKIDNDLIIYLKCVHELEPWLVARQLGVRNTPEIFLIANVANKASHSETLPSQRLSILGKLKVNSLNRFLQSLTNVVEKYTPELVVNKTEMHELRMSREIKKLQEDAYKKSLEMDRIKAIEKEKSLKHAQDLKLNSTARQLKWLKACIDEIQPFETTGKQATLQFRTSSGKRFVKKFPSMTTLYQIYQSIGCHIYLAVYSSDPAEWSNALQDKIRQLSADDDMLCFKEGQLETATATTIEELGHIINNELTSFDLERGKLEFDFELVSPFPKYTVHPNEHMSVDQVPQLWPNGSLLVEALDEEDEEDEENEEQ.

Topologically, residues 1–80 (MPVVNHEDSE…PTQTSTPMAE (80 aa)) are cytoplasmic. A helical membrane pass occupies residues 81–101 (TLVPPALGPRPLLFTASLPVV). The Lumenal segment spans residues 102–151 (RPLPANFRNDFRTIGLNGRSNTVWSMFESFSYDGNPFLFILLLIPRIINR). A helical membrane pass occupies residues 152-172 (LSATIFTFFCTLLSLHSISGG). Topologically, residues 173–584 (GNSGKPKISK…DEEDEENEEQ (412 aa)) are cytoplasmic. One can recognise a UBX domain in the interval 426–570 (ETTGKQATLQ…WPNGSLLVEA (145 aa)).

As to quaternary structure, component of the DOA10 ubiquitin ligase complex which contains E3 ligase SSM4/DOA10 and CDC48-binding protein UBX2/SEL1. Component of the HRD1 ubiquitin ligase complex which contains the E3 ligase HRD1, its cofactors HRD3, USA1 and DER1, substrate recruiting factor YOS9 and UBX2. In ERAD-L, HRD3 and YOS9 jointly bind misfolded glycoproteins in the endoplasmic reticulum (ER) lumen. Movement of ERAD-L substrates through the ER membrane is facilitated by HRD1 and DER1 which have lateral gates facing each other and which distort the membrane region between the lateral gates, making it much thinner than a normal phospholipid bilayer. Substrates insert into the membrane as a hairpin loop with one strand interacting with DER1 and the other with HRD1. Both the DOA10 and HRD1 ubiquitin ligase complexes interact with the heterotrimeric CDC48-NPL4-UFD1 ATPase complex which is recruited by UBX2 via its interaction with CDC48 and which moves ubiquitinated substrates to the cytosol for targeting to the proteasome.

The protein resides in the endoplasmic reticulum membrane. Integral endoplasmic reticulum membrane protein that coordinates the assembly of the ER-associated protein degradation (ERAD) machinery at the ER membrane. Mediates binding of CDC48 to the E3 ubiquitin ligases SSM4/DOA10 and HRD1, and to ERAD substrates. Component of the DOA10 ubiquitin ligase complex, which is part of the ERAD-C pathway responsible for the rapid degradation of membrane proteins with misfolded cytoplasmic domains. ERAD-C substrates are ubiquitinated through DOA10 in conjunction with the E2 ubiquitin-conjugating enzymes UBC6 and UBC7-CUE1. Also a component of the HRD1 ubiquitin ligase complex, which is part of the ERAD-L and ERAD-M pathways responsible for the rapid degradation of soluble lumenal and membrane proteins with misfolded lumenal domains (ERAD-L), or ER-membrane proteins with misfolded transmembrane domains (ERAD-M). ERAD-L substrates are ubiquitinated through HRD1 in conjunction with the E2 ubiquitin-conjugating enzymes UBC1 and UBC7-CUE1. Ubiquitinated substrates are then removed to the cytosol via the action of the CDC48-NPL4-UFD1 ATPase complex and targeted to the proteasome. This is UBX domain-containing protein 2 (UBX2) from Saccharomyces cerevisiae (strain ATCC 204508 / S288c) (Baker's yeast).